Here is a 413-residue protein sequence, read N- to C-terminus: L-cysteine:1D-myo-inositol 2-amino-2-deoxy-alpha-D-glucopyranoside ligase (413 aa).

C15 serves as a coordination point for Zn(2+). L-cysteinyl-5'-AMP-binding positions include 15 to 18 (CGIT), T30, and 53 to 55 (NVT). The 'HIGH' region signature appears at 17-27 (ITPYDATHLGH). A 'ERGGDP' region motif is present at residues 155–160 (ERGGDP). W195 is a binding site for L-cysteinyl-5'-AMP. C199 provides a ligand contact to Zn(2+). L-cysteinyl-5'-AMP is bound at residue 217–219 (GTD). Residue H224 participates in Zn(2+) binding. An L-cysteinyl-5'-AMP-binding site is contributed by V251. A 'KMSKS' region motif is present at residues 257–261 (KMSKS).

Belongs to the class-I aminoacyl-tRNA synthetase family. MshC subfamily. Monomer. Zn(2+) is required as a cofactor.

It catalyses the reaction 1D-myo-inositol 2-amino-2-deoxy-alpha-D-glucopyranoside + L-cysteine + ATP = 1D-myo-inositol 2-(L-cysteinylamino)-2-deoxy-alpha-D-glucopyranoside + AMP + diphosphate + H(+). Functionally, catalyzes the ATP-dependent condensation of GlcN-Ins and L-cysteine to form L-Cys-GlcN-Ins. This is L-cysteine:1D-myo-inositol 2-amino-2-deoxy-alpha-D-glucopyranoside ligase from Frankia alni (strain DSM 45986 / CECT 9034 / ACN14a).